A 1732-amino-acid chain; its full sequence is Serine/threonine-protein kinase MRCK alpha (1732 aa).

Positions 77 to 343 (FEILKVIGRG…IEDFKKHPFF (267 aa)) constitute a Protein kinase domain. Residues 83–91 (IGRGAFGEV) and Lys106 contribute to the ATP site. The active-site Proton acceptor is the Asp201. Phosphoserine; by autocatalysis is present on residues Ser222 and Ser234. At Thr240 the chain carries Phosphothreonine; by autocatalysis. In terms of domain architecture, AGC-kinase C-terminal spans 344 to 414 (SGIDWDNIRN…TSSCVLSDRS (71 aa)). Coiled coils occupy residues 437–670 (NNLA…KQKQ), 713–820 (SEIK…WEAQ), and 880–943 (LELQ…SEKG). Residues 973-1002 (CTPAGKGRRIADSAPLPVHTPTLRKKGCPA) form a disordered region. A Phorbol-ester/DAG-type zinc finger spans residues 1012-1062 (THQFFVKSFTAPTKCHQCTSLMVGLIRQGCSCEVCGFSCHITCVNKAPTTC). Positions 1082–1201 (GTAYEGHVRI…WVGVLSELHK (120 aa)) constitute a PH domain. Ser1127 is modified (phosphoserine). The CNH domain occupies 1227–1499 (IKTTQAAAII…RPLNTEGSLN (273 aa)). Position 1545 is a phosphoserine (Ser1545). The region spanning 1571–1584 (ISNPTNFNHIAHMG) is the CRIB domain. A disordered region spans residues 1592–1732 (LKDLPMNPRP…ESTDRGSWDP (141 aa)). Positions 1604-1619 (SRTVFSGSVSIPSITK) are enriched in polar residues. 9 positions are modified to phosphoserine: Ser1611, Ser1613, Ser1629, Ser1651, Ser1664, Ser1669, Ser1693, Ser1719, and Ser1721. The segment covering 1625–1640 (GRSMSASSGLSARSSA) has biased composition (low complexity). The segment covering 1665 to 1674 (PSEGSLSSGG) has biased composition (low complexity).

It belongs to the protein kinase superfamily. AGC Ser/Thr protein kinase family. DMPK subfamily. Homodimer and homotetramer via the coiled coil regions. Interacts tightly with GTP-bound but not GDP-bound CDC42. Forms a tripartite complex with MYO18A and LURAP1 with the latter acting as an adapter connecting CDC42BPA and MYO18A. LURAP1 binding results in activation of CDC42BPA by abolition of its negative autoregulation. Interacts with LURAP1. Interacts (via AGC-kinase C-terminal domain) with FAM89B/LRAP25 (via LRR repeat). Forms a tripartite complex with FAM89B/LRAP25 and LIMK1. Mg(2+) is required as a cofactor. Proteolytically cleaved by caspases upon apoptosis induction. The cleavage at Asp-478 by CASP3 increases its kinase activity (in vitro). As to expression, highly expressed in the brain and lung and present in lower levels in all other tissues tested.

The protein resides in the cytoplasm. The protein localises to the cell projection. It is found in the lamellipodium. It catalyses the reaction L-seryl-[protein] + ATP = O-phospho-L-seryl-[protein] + ADP + H(+). The catalysed reaction is L-threonyl-[protein] + ATP = O-phospho-L-threonyl-[protein] + ADP + H(+). Maintained in an inactive, closed conformation by an interaction between the kinase domain and the negative autoregulatory C-terminal coiled-coil region. Agonist binding to the phorbol ester binding site disrupts this, releasing the kinase domain to allow N-terminus-mediated dimerization and kinase activation by transautophosphorylation. Inhibited by chelerythrine chloride. Serine/threonine-protein kinase which is an important downstream effector of CDC42 and plays a role in the regulation of cytoskeleton reorganization and cell migration. Regulates actin cytoskeletal reorganization via phosphorylation of PPP1R12A and MYL9/MLC2. In concert with MYO18A and LURAP1, is involved in modulating lamellar actomyosin retrograde flow that is crucial to cell protrusion and migration. Phosphorylates: PPP1R12C, LIMK1 and LIMK2. May play a role in TFRC-mediated iron uptake. In concert with FAM89B/LRAP25 mediates the targeting of LIMK1 to the lamellipodium resulting in its activation and subsequent phosphorylation of CFL1 which is important for lamellipodial F-actin regulation. Triggers the formation of an extrusion apical actin ring required for epithelial extrusion of apoptotic cells. This is Serine/threonine-protein kinase MRCK alpha from Rattus norvegicus (Rat).